We begin with the raw amino-acid sequence, 368 residues long: MVVLGSTGSIGKNALKIAKKFGVEIEALSCGKNIALINEQIKVFKPKKVAILDPNDLNDLEPLGAKVFVGLEGIDAMIEECVSNLVLNAIVGVAGLKASFKSLQRNKKLALANKESLVSAGHLLDISQITPVDSEHFGLWALLQNKTLKPKSLIISASGGAFRDTPLELIAIQNAQNALKHPNWSMGSKITIDSASMVNKLFEILETYWLFGASLKIDALIERSSIVHALVEFEDNSIIAHLASADMQLPISYAIDPKLASLNASIKPLDLYALSAIKFEPISMERYTLWRYKDLLLENPKLGVVLNASNEVAIEKFLDKEIAFGGLIQTISQALELYAKMPFKLSSLDEVLALDREVRERFKNVARV.

Thr7, Gly8, Ser9, Ile10, Gly31, Lys32, Asn33, and Asn113 together coordinate NADPH. Residue Lys114 participates in 1-deoxy-D-xylulose 5-phosphate binding. Glu115 contacts NADPH. Asp133 contacts Mn(2+). Residues Ser134, Glu135, Ser158, and His181 each coordinate 1-deoxy-D-xylulose 5-phosphate. Glu135 is a binding site for Mn(2+). NADPH is bound at residue Gly187. Residues Ser194, Asn199, Lys200, and Glu203 each coordinate 1-deoxy-D-xylulose 5-phosphate. A Mn(2+)-binding site is contributed by Glu203.

This sequence belongs to the DXR family. Requires Mg(2+) as cofactor. Mn(2+) is required as a cofactor.

It catalyses the reaction 2-C-methyl-D-erythritol 4-phosphate + NADP(+) = 1-deoxy-D-xylulose 5-phosphate + NADPH + H(+). The protein operates within isoprenoid biosynthesis; isopentenyl diphosphate biosynthesis via DXP pathway; isopentenyl diphosphate from 1-deoxy-D-xylulose 5-phosphate: step 1/6. Functionally, catalyzes the NADPH-dependent rearrangement and reduction of 1-deoxy-D-xylulose-5-phosphate (DXP) to 2-C-methyl-D-erythritol 4-phosphate (MEP). In Helicobacter pylori (strain P12), this protein is 1-deoxy-D-xylulose 5-phosphate reductoisomerase.